The sequence spans 613 residues: Proton myo-inositol cotransporter hmit-1.2 (613 aa).

The Cytoplasmic portion of the chain corresponds to 1-21 (MVAVEFKVSESGRPRPEKNPK). The helical transmembrane segment at 22–42 (LGFFVYLLGSAAIIGGFLFGY) threads the bilayer. Topologically, residues 43–69 (DTSVVSAAMLYVPEAPGLKPMGTVWKE) are extracellular. A helical transmembrane segment spans residues 70 to 90 (VIVSITPGMAAVGAWFSGAGS). The Cytoplasmic segment spans residues 91 to 96 (DRYGRK). Residues 97–117 (PIIIGSTLIFVCGAVICAVAW) traverse the membrane as a helical segment. The Extracellular portion of the chain corresponds to 118-119 (TK). A helical membrane pass occupies residues 120–140 (IVMLIGRIFLGVGIGFASMVV). Topologically, residues 141 to 157 (PVYLGEASPTHVRGTLV) are cytoplasmic. The helical transmembrane segment at 158–178 (SAFAMMISFGQVVANIMGGVF) threads the bilayer. Residues 179 to 189 (SYWEPYTIGWR) lie on the Extracellular side of the membrane. Residues 190–210 (LMFAFAGIPALIQFVCFIFLP) traverse the membrane as a helical segment. At 211–279 (ETPRWLYENG…RILKTPHVLK (69 aa)) the chain is on the cytoplasmic side. The chain crosses the membrane as a helical span at residues 280-300 (ACFIGSMLQAFQQLAGINTIL). Over 301-317 (YYTADIIRSAGIENYHT) the chain is Extracellular. Residues 318 to 338 (IIWISVILSICNLIGPFAPMF) traverse the membrane as a helical segment. The Cytoplasmic portion of the chain corresponds to 339–347 (FIEKLGRRK). Residues 348-368 (LFLFSCAGVVVSLVLIGVSFL) traverse the membrane as a helical segment. Residues 369–472 (LVGNDSAPNF…QKHHCTTSYT (104 aa)) are Extracellular-facing. N-linked (GlcNAc...) asparagine glycosylation is found at N372, N451, and N456. Residues 473–493 (ILPIVMMGVYLLTFSCGFTSL) traverse the membrane as a helical segment. At 494–515 (PWVLNSEFYPMWARSTCVSIST) the chain is on the cytoplasmic side. Residues 516-536 (LSNWVFNLIIALTYLSLTHAI) traverse the membrane as a helical segment. At 537-539 (TKY) the chain is on the extracellular side. A helical membrane pass occupies residues 540–560 (GAFWLYAIFTIIAFIFIYFLV). Residues 561 to 613 (PETTGYSIDEVEMLFMNKRQRNIAMQARQAKLDAASDKDKNSSTSLSTETITM) lie on the Cytoplasmic side of the membrane. A disordered region spans residues 594 to 613 (AASDKDKNSSTSLSTETITM). A compositionally biased stretch (polar residues) spans 602-613 (SSTSLSTETITM).

This sequence belongs to the major facilitator superfamily. Sugar transporter (TC 2.A.1.1) family. In terms of tissue distribution, expressed in the excretory canal cell and in pairs of amphid and sheath glia.

Its subcellular location is the cell membrane. It is found in the perikaryon. The catalysed reaction is myo-inositol(out) + H(+)(out) = myo-inositol(in) + H(+)(in). H(+)-myo-inositol cotransporter. Probably by promoting the transport of myo-inositol regulates intracellular osmosis in response to hyperosmotic stress. In Caenorhabditis elegans, this protein is Proton myo-inositol cotransporter hmit-1.2.